A 181-amino-acid polypeptide reads, in one-letter code: MGDPKKSRKKWETPGHPWIKERIGYEQELLGKYGLRNKREIWIAQSIIRKFRHQARSLLALPPAERAVREKQLVGKLLKMGLLKKETATVDDILSLTEQDLLERRLQTIVYKKGLSNTIYQARQLITHGHIAVNGKRVTSPGYIVNVDEENLIDYYVTSSFKSRPPVMSQQEGGEIGVKQA.

Residues 104 to 172 enclose the S4 RNA-binding domain; it reads RRLQTIVYKK…SRPPVMSQQE (69 aa).

Belongs to the universal ribosomal protein uS4 family. As to quaternary structure, part of the 30S ribosomal subunit. Contacts protein S5. The interaction surface between S4 and S5 is involved in control of translational fidelity.

In terms of biological role, one of the primary rRNA binding proteins, it binds directly to 16S rRNA where it nucleates assembly of the body of the 30S subunit. Its function is as follows. With S5 and S12 plays an important role in translational accuracy. This is Small ribosomal subunit protein uS4 from Saccharolobus solfataricus (strain ATCC 35092 / DSM 1617 / JCM 11322 / P2) (Sulfolobus solfataricus).